The chain runs to 25 residues: Bombinin-like peptide 4 (25 aa).

Phe25 carries the post-translational modification Phenylalanine amide.

The protein belongs to the bombinin family. As to expression, expressed by the skin glands.

Its subcellular location is the secreted. Has antimicrobial activity, but no hemolytic activity. Preference on killing Gram-negative non-enteric bacteria. The protein is Bombinin-like peptide 4 of Bombina orientalis (Oriental fire-bellied toad).